We begin with the raw amino-acid sequence, 559 residues long: MSSDLKRHSRTITDGRTRAGARAMLKAIGFTDEDLAKPIIGIANTWIETMPCNINLRALAARVKEGVRAAGGTPMEFNTVAISDGVTMGTEGMKASLISRDLIADSIELMGRGYMFDAIIALVACDKTIPGAAMGLTRLNVPGFLLYGGSIAPGHWRGKEITIQHVYEAIGAVAAGKMTDEELKEIEDAACPGPGACGGQYTANTMATVMEIIGLSPIGTAAVPAADPRKDSVGYRAGQLIMDVLRRDLKPRDILTRAAFENAIASVALTGGSTNAVLHLLALAREAGVPLTLDDFDTISRRTPLCCDLMPSGKYSAIHVDQAGGIQVIAKRLVDGGFAHGDAITVTGRTLAEEAADAVETPGQDVIRPLDNPIKPTGGLLVLRGNLAPEGSVVKLFGYERTYHRGPARVFDSEEAAMAAIVGGEIRPDDIVVIRYEGPRGGPGMREMLGVTSAIVGAGLGQSVSLVTDGRFSGATRGVMIGHVAPEAARGGPLAIVQEGDEIEINLDERRVDLVLSEEEIADRLLAWQPPAPRFEWGVMARYSALVSSASEGAVLVTP.

[2Fe-2S] cluster is bound at residue C52. Residue D84 coordinates Mg(2+). C125 contacts [2Fe-2S] cluster. Positions 126 and 127 each coordinate Mg(2+). K127 is subject to N6-carboxylysine. C197 contributes to the [2Fe-2S] cluster binding site. Residue E447 participates in Mg(2+) binding. Catalysis depends on S473, which acts as the Proton acceptor.

This sequence belongs to the IlvD/Edd family. In terms of assembly, homodimer. [2Fe-2S] cluster serves as cofactor. Requires Mg(2+) as cofactor.

The enzyme catalyses (2R)-2,3-dihydroxy-3-methylbutanoate = 3-methyl-2-oxobutanoate + H2O. It catalyses the reaction (2R,3R)-2,3-dihydroxy-3-methylpentanoate = (S)-3-methyl-2-oxopentanoate + H2O. It participates in amino-acid biosynthesis; L-isoleucine biosynthesis; L-isoleucine from 2-oxobutanoate: step 3/4. It functions in the pathway amino-acid biosynthesis; L-valine biosynthesis; L-valine from pyruvate: step 3/4. Functionally, functions in the biosynthesis of branched-chain amino acids. Catalyzes the dehydration of (2R,3R)-2,3-dihydroxy-3-methylpentanoate (2,3-dihydroxy-3-methylvalerate) into 2-oxo-3-methylpentanoate (2-oxo-3-methylvalerate) and of (2R)-2,3-dihydroxy-3-methylbutanoate (2,3-dihydroxyisovalerate) into 2-oxo-3-methylbutanoate (2-oxoisovalerate), the penultimate precursor to L-isoleucine and L-valine, respectively. This is Dihydroxy-acid dehydratase from Roseiflexus castenholzii (strain DSM 13941 / HLO8).